We begin with the raw amino-acid sequence, 618 residues long: Mitochondrial Rho GTPase 2 (618 aa).

The Cytoplasmic portion of the chain corresponds to 1–591 (MKRDVRILLL…LNAVELGAAS (591 aa)). Residues 2–168 (KRDVRILLLG…FYYAQKAVLH (167 aa)) form the Miro 1 domain. The GTP site is built by Gly-16, Lys-17, Thr-18, and Ser-19. Thr-18 contacts Mg(2+). The Mg(2+) site is built by Pro-35 and Asp-57. The GTP site is built by Ser-59, Asn-118, Lys-119, Asp-121, Ala-149, and Lys-150. EF-hand domains follow at residues 184 to 219 (ACSR…CFGN) and 304 to 339 (LGYQ…FPCM). Ca(2+) is bound by residues Asp-197, Asp-199, Asn-201, Glu-208, Asp-317, Asp-319, Asp-321, and Glu-328. The region spanning 416–579 (RNVFLCKVLG…YTKLATAATF (164 aa)) is the Miro 2 domain. Gly-428, Gly-430, Lys-431, Ser-432, and Ala-433 together coordinate GTP. Ser-432 is a Mg(2+) binding site. Glu-474 is a Mg(2+) binding site. Residues Lys-528, Asp-530, and Cys-559 each contribute to the GTP site. A helical; Anchor for type IV membrane protein membrane pass occupies residues 592-614 (FWLRVALGAAVTALVGFTLYRVL). The Mitochondrial intermembrane segment spans residues 615–618 (AKNK).

This sequence belongs to the mitochondrial Rho GTPase family. In terms of assembly, homodimer.

Its subcellular location is the mitochondrion outer membrane. The enzyme catalyses GTP + H2O = GDP + phosphate + H(+). It carries out the reaction ATP + H2O = ADP + phosphate + H(+). The catalysed reaction is UTP + H2O = UDP + phosphate + H(+). Its function is as follows. Atypical mitochondrial nucleoside-triphosphatase (NTPase) involved in mitochondrial trafficking. Probably involved in control of anterograde transport of mitochondria and their subcellular distribution. Can hydrolyze GTP, ATP and UTP. The polypeptide is Mitochondrial Rho GTPase 2 (RHOT2) (Gallus gallus (Chicken)).